A 424-amino-acid chain; its full sequence is Glucan endo-1,3-alpha-glucosidase agn1 (424 aa).

The first 20 residues, 1–20, serve as a signal peptide directing secretion; sequence MKLVLFLVLLFSALINLTNA.

It belongs to the glycosyl hydrolase 71 family. As to quaternary structure, monomer. In terms of processing, not glycosylated.

The protein localises to the secreted. Its subcellular location is the cell wall. The enzyme catalyses Endohydrolysis of (1-&gt;3)-alpha-D-glucosidic linkages in isolichenin, pseudonigeran and nigeran.. Its function is as follows. Has a role in cell separation where it is required for the degradation of the cell wall material surrounding the septum (the septum edging) which must be hydrolyzed before full separation of the daughter cells can occur. Hydrolyzes 1,3-alpha-glucan predominantly into pentasaccharides. The sequence is that of Glucan endo-1,3-alpha-glucosidase agn1 (agn1) from Schizosaccharomyces pombe (strain 972 / ATCC 24843) (Fission yeast).